The following is a 621-amino-acid chain: DnaJ homolog subfamily C member 2 (621 aa).

N-acetylmethionine is present on methionine 1. Serine 47, serine 49, serine 60, and serine 63 each carry phosphoserine. The 74-residue stretch at 88-161 folds into the J domain; sequence DHYAVLGLGH…VKRRAFNSVD (74 aa). The tract at residues 160 to 250 is ZRF1-UBD; it reads VDPTFDNSVP…RDERKWIEKQ (91 aa). Residue serine 183 is modified to Phosphoserine. Disordered stretches follow at residues 287–312 and 426–453; these read GKAK…KEKQ and KEEA…GSKN. SANT domains follow at residues 449–511 and 549–604; these read SGSK…KLDP and IDSI…EMVK.

Component of ribosome-associated complex (RAC), a heterodimer composed of Hsp70/DnaK-type chaperone HSPA14 and Hsp40/DnaJ-type chaperone DNAJC2. Interacts (via ZRF1-UBD region) with ID1. Post-translationally, phosphorylated in M (mitotic) phase.

The protein localises to the nucleus. The protein resides in the cytoplasm. It is found in the cytosol. Its function is as follows. Acts both as a chaperone in the cytosol and as a chromatin regulator in the nucleus. When cytosolic, acts as a molecular chaperone: component of the ribosome-associated complex (RAC), a complex involved in folding or maintaining nascent polypeptides in a folding-competent state. In the RAC complex, stimulates the ATPase activity of the ribosome-associated pool of Hsp70-type chaperones HSPA14 that bind to the nascent polypeptide chain. When nuclear, mediates the switching from polycomb-repressed genes to an active state: specifically recruited at histone H2A ubiquitinated at 'Lys-119' (H2AK119ub), and promotes the displacement of the polycomb PRC1 complex from chromatin, thereby facilitating transcription activation. The chain is DnaJ homolog subfamily C member 2 (Dnajc2) from Rattus norvegicus (Rat).